We begin with the raw amino-acid sequence, 264 residues long: 3-methyl-2-oxobutanoate hydroxymethyltransferase 2 (264 aa).

The Mg(2+) site is built by aspartate 44 and aspartate 83. 3-methyl-2-oxobutanoate contacts are provided by residues 44 to 45 (DS), aspartate 83, and lysine 111. Glutamate 113 contacts Mg(2+). Glutamate 180 serves as the catalytic Proton acceptor.

It belongs to the PanB family. In terms of assembly, homodecamer; pentamer of dimers. Requires Mg(2+) as cofactor.

It is found in the cytoplasm. The catalysed reaction is 3-methyl-2-oxobutanoate + (6R)-5,10-methylene-5,6,7,8-tetrahydrofolate + H2O = 2-dehydropantoate + (6S)-5,6,7,8-tetrahydrofolate. It participates in cofactor biosynthesis; (R)-pantothenate biosynthesis; (R)-pantoate from 3-methyl-2-oxobutanoate: step 1/2. Functionally, catalyzes the reversible reaction in which hydroxymethyl group from 5,10-methylenetetrahydrofolate is transferred onto alpha-ketoisovalerate to form ketopantoate. The chain is 3-methyl-2-oxobutanoate hydroxymethyltransferase 2 from Hahella chejuensis (strain KCTC 2396).